The following is a 26-amino-acid chain: Hemocyanin subunit 3 (26 aa).

It belongs to the tyrosinase family. Hemocyanin subfamily. Hemolymph.

It localises to the secreted. It is found in the extracellular space. Functionally, hemocyanins are copper-containing oxygen carriers occurring freely dissolved in the hemolymph of many mollusks and arthropods. The protein is Hemocyanin subunit 3 of Homarus americanus (American lobster).